Here is a 285-residue protein sequence, read N- to C-terminus: Bifunctional protein FolD (285 aa).

Residues Gly-165–Ser-167 and Ser-190 contribute to the NADP(+) site.

This sequence belongs to the tetrahydrofolate dehydrogenase/cyclohydrolase family. Homodimer.

The enzyme catalyses (6R)-5,10-methylene-5,6,7,8-tetrahydrofolate + NADP(+) = (6R)-5,10-methenyltetrahydrofolate + NADPH. It catalyses the reaction (6R)-5,10-methenyltetrahydrofolate + H2O = (6R)-10-formyltetrahydrofolate + H(+). Its pathway is one-carbon metabolism; tetrahydrofolate interconversion. Catalyzes the oxidation of 5,10-methylenetetrahydrofolate to 5,10-methenyltetrahydrofolate and then the hydrolysis of 5,10-methenyltetrahydrofolate to 10-formyltetrahydrofolate. In Burkholderia ambifaria (strain ATCC BAA-244 / DSM 16087 / CCUG 44356 / LMG 19182 / AMMD) (Burkholderia cepacia (strain AMMD)), this protein is Bifunctional protein FolD.